Consider the following 449-residue polypeptide: Elongation factor 1-alpha C (449 aa).

Residues 5–234 form the tr-type G domain; the sequence is KQHVSIVVIG…DACDPPKRPV (230 aa). A G1 region spans residues 14–21; it reads GHVDSGKS. Residue 14 to 21 coordinates GTP; sequence GHVDSGKS. An N6,N6-dimethyllysine modification is found at K55. Residues 70–74 form a G2 region; the sequence is GITID. K79 is subject to N6,N6,N6-trimethyllysine. The interval 91 to 94 is G3; sequence DAPG. GTP is bound by residues 91–95 and 153–156; these read DAPGH and NKMD. The segment at 153–156 is G4; that stretch reads NKMD. The residue at position 187 (K187) is an N6,N6,N6-trimethyllysine. The interval 194 to 196 is G5; that stretch reads SGW. Residue K265 is modified to N6-methyllysine. K310 and K400 each carry N6,N6,N6-trimethyllysine.

The protein belongs to the TRAFAC class translation factor GTPase superfamily. Classic translation factor GTPase family. EF-Tu/EF-1A subfamily.

It localises to the cytoplasm. This protein promotes the GTP-dependent binding of aminoacyl-tRNA to the A-site of ribosomes during protein biosynthesis. The protein is Elongation factor 1-alpha C (TEF-C) of Porphyra purpurea (Red seaweed).